The sequence spans 172 residues: Type VI secretion system sheath protein TssB1 (172 aa).

Forms a heterodimer with TssC1. Heterodimers assemble to form the sheath of the T6SS machinery. Interacts with TagJ. Interacts with TssA1.

Its function is as follows. Core component of the H1 type VI (H1-T6SS) secretion system that plays a role in the release of toxins targeting both eukaryotic and prokaryotic species. Forms the sheath of the structure by assembling into tubules together with TssC1 resulting in the stacking of cogwheel-like structures showing predominantly a 12-fold symmetry. The sheath contracts to provide the energy needed for effector delivery. This Pseudomonas aeruginosa (strain ATCC 15692 / DSM 22644 / CIP 104116 / JCM 14847 / LMG 12228 / 1C / PRS 101 / PAO1) protein is Type VI secretion system sheath protein TssB1.